A 243-amino-acid polypeptide reads, in one-letter code: tRNA (cytidine/uridine-2'-O-)-methyltransferase TrmJ (243 aa).

S-adenosyl-L-methionine contacts are provided by residues 79 to 81, Gly114, Ile134, and 141 to 143; these read TSA and SSL.

The protein belongs to the class IV-like SAM-binding methyltransferase superfamily. RNA methyltransferase TrmH family. In terms of assembly, homodimer.

The protein localises to the cytoplasm. It catalyses the reaction cytidine(32) in tRNA + S-adenosyl-L-methionine = 2'-O-methylcytidine(32) in tRNA + S-adenosyl-L-homocysteine + H(+). The enzyme catalyses uridine(32) in tRNA + S-adenosyl-L-methionine = 2'-O-methyluridine(32) in tRNA + S-adenosyl-L-homocysteine + H(+). Catalyzes the formation of 2'O-methylated cytidine (Cm32) or 2'O-methylated uridine (Um32) at position 32 in tRNA. This is tRNA (cytidine/uridine-2'-O-)-methyltransferase TrmJ (trmJ) from Salmonella choleraesuis (strain SC-B67).